The following is a 115-amino-acid chain: uncharacterized protein (115 aa).

The region spanning 1–91 (MTEYNANSIR…SELEGFKNVS (91 aa)) is the HTH arsR-type domain. Residues 30 to 53 (ASLISHTLLLSYATVLRHLRILND) constitute a DNA-binding region (H-T-H motif).

Essential for virus function. This is an uncharacterized protein from Saccharolobus solfataricus (Sulfolobus solfataricus).